The chain runs to 209 residues: Redox-sensing transcriptional repressor Rex (209 aa).

A DNA-binding region (H-T-H motif) is located at residues 16–55 (LYYRFIQNLSLSGKQRVSSAELSEAVKVDSATIRRDFSYF). Residue 90-95 (GVGNLG) participates in NAD(+) binding.

It belongs to the transcriptional regulatory Rex family. As to quaternary structure, homodimer.

Its subcellular location is the cytoplasm. Modulates transcription in response to changes in cellular NADH/NAD(+) redox state. This Bacillus cytotoxicus (strain DSM 22905 / CIP 110041 / 391-98 / NVH 391-98) protein is Redox-sensing transcriptional repressor Rex.